A 241-amino-acid polypeptide reads, in one-letter code: MTTATQSSAPGVNVDQAEVEKFSALAARWWDPESEFKPLHAINPLRLGWIQETAGSLSGKRVLDVGCGGGILSESMAVAGAQVTGIDLAEKSLKIARLHGLESGVKVDYRAVPVEELAAEQPGQYDVVTCMEMLEHVPDPASVVRACAALAKPGRWVFFSTLNRNPKSFLFAIVGAEYVLRLLPRGTHSYDSFIKPSELAASARQAGLEPTGMRGMEYNPITQVYSLSANTSVNYLMSTRK.

S-adenosyl-L-methionine is bound by residues Arg46, Gly66, Asp87, and Met131.

The protein belongs to the methyltransferase superfamily. UbiG/COQ3 family.

It catalyses the reaction a 3-demethylubiquinol + S-adenosyl-L-methionine = a ubiquinol + S-adenosyl-L-homocysteine + H(+). It carries out the reaction a 3-(all-trans-polyprenyl)benzene-1,2-diol + S-adenosyl-L-methionine = a 2-methoxy-6-(all-trans-polyprenyl)phenol + S-adenosyl-L-homocysteine + H(+). It participates in cofactor biosynthesis; ubiquinone biosynthesis. In terms of biological role, O-methyltransferase that catalyzes the 2 O-methylation steps in the ubiquinone biosynthetic pathway. The sequence is that of Ubiquinone biosynthesis O-methyltransferase from Bordetella parapertussis (strain 12822 / ATCC BAA-587 / NCTC 13253).